The following is a 309-amino-acid chain: Tumor necrosis factor ligand superfamily member 9 (309 aa).

Residues 1–16 are compositionally biased toward basic and acidic residues; that stretch reads MDQHTLDVEDTADARH. Positions 1 to 20 are disordered; that stretch reads MDQHTLDVEDTADARHPAGT. Residues 1–82 are Cytoplasmic-facing; sequence MDQHTLDVED…ALNFCSRHPK (82 aa). Residues 83–103 form a helical; Signal-anchor for type II membrane protein membrane-spanning segment; it reads LYGLVALVLLLLIAACVPIFT. At 104 to 309 the chain is on the extracellular side; it reads RTEPRPALTI…FLVKPDNPWE (206 aa). N-linked (GlcNAc...) asparagine glycans are attached at residues asparagine 139, asparagine 161, and asparagine 293. The 156-residue stretch at 147-302 folds into the THD domain; that stretch reads VFAKLLAKNQ…NTTSFGLFLV (156 aa).

It belongs to the tumor necrosis factor family. In terms of assembly, homotrimer.

It localises to the membrane. In terms of biological role, cytokine that binds to TNFRSF9. Induces the proliferation of activated peripheral blood T-cells. May have a role in activation-induced cell death (AICD). May play a role in cognate interactions between T-cells and B-cells/macrophages. The sequence is that of Tumor necrosis factor ligand superfamily member 9 (Tnfsf9) from Mus musculus (Mouse).